Reading from the N-terminus, the 243-residue chain is Peptidyl-tRNA hydrolase (243 aa).

Position 14 (Y14) interacts with tRNA. The active-site Proton acceptor is H19. Residues F64, N66, and N112 each coordinate tRNA. The interval 184 to 225 is disordered; it reads AAQTRPAEKAKPLATAKPKEGEARTSGGSVAEVGAPPPSPTG. Over residues 189–206 the composition is skewed to basic and acidic residues; sequence PAEKAKPLATAKPKEGEA.

This sequence belongs to the PTH family. In terms of assembly, monomer.

It is found in the cytoplasm. It carries out the reaction an N-acyl-L-alpha-aminoacyl-tRNA + H2O = an N-acyl-L-amino acid + a tRNA + H(+). In terms of biological role, hydrolyzes ribosome-free peptidyl-tRNAs (with 1 or more amino acids incorporated), which drop off the ribosome during protein synthesis, or as a result of ribosome stalling. Its function is as follows. Catalyzes the release of premature peptidyl moieties from peptidyl-tRNA molecules trapped in stalled 50S ribosomal subunits, and thus maintains levels of free tRNAs and 50S ribosomes. In Rhodospirillum rubrum (strain ATCC 11170 / ATH 1.1.1 / DSM 467 / LMG 4362 / NCIMB 8255 / S1), this protein is Peptidyl-tRNA hydrolase.